The primary structure comprises 105 residues: Nucleoid-associated protein Ccur92_18190 (105 aa).

The protein belongs to the YbaB/EbfC family. In terms of assembly, homodimer.

It is found in the cytoplasm. The protein localises to the nucleoid. Functionally, binds to DNA and alters its conformation. May be involved in regulation of gene expression, nucleoid organization and DNA protection. The polypeptide is Nucleoid-associated protein Ccur92_18190 (Campylobacter curvus (strain 525.92)).